The primary structure comprises 107 residues: Probable 4-amino-4-deoxy-L-arabinose-phosphoundecaprenol flippase subunit ArnE (107 aa).

One can recognise an EamA domain in the interval 31–105 (RVWGWLALSL…IIVGIILLGG (75 aa)). 3 consecutive transmembrane segments (helical) span residues 34–54 (GWLALSLVLLGCAMLLWLFVL), 57–77 (VPVSVAYPMLSLNFIFITLAA), and 85–105 (IALRHGVGVLLIIVGIILLGG).

Belongs to the ArnE family. Heterodimer of ArnE and ArnF.

The protein localises to the cell inner membrane. It functions in the pathway bacterial outer membrane biogenesis; lipopolysaccharide biosynthesis. Translocates 4-amino-4-deoxy-L-arabinose-phosphoundecaprenol (alpha-L-Ara4N-phosphoundecaprenol) from the cytoplasmic to the periplasmic side of the inner membrane. This chain is Probable 4-amino-4-deoxy-L-arabinose-phosphoundecaprenol flippase subunit ArnE, found in Enterobacter sp. (strain 638).